Consider the following 424-residue polypeptide: GTPase Obg (424 aa).

The Obg domain occupies 1–158; the sequence is MFVDKARIFV…RWISLELKLL (158 aa). Residues 159–331 enclose the OBG-type G domain; the sequence is ADVGLIGFPN…LLKECARVLS (173 aa). Residues 165–172, 190–194, 212–215, 282–285, and 312–314 each bind GTP; these read GFPNVGKS, FTTIT, DIPG, NKAD, and SAA. Ser172 and Thr192 together coordinate Mg(2+). Positions 345-424 constitute an OCT domain; it reads RFVPEDKHFT…LNDFEFEFLK (80 aa).

It belongs to the TRAFAC class OBG-HflX-like GTPase superfamily. OBG GTPase family. In terms of assembly, monomer. The cofactor is Mg(2+).

Its subcellular location is the cytoplasm. Its function is as follows. An essential GTPase which binds GTP, GDP and possibly (p)ppGpp with moderate affinity, with high nucleotide exchange rates and a fairly low GTP hydrolysis rate. Plays a role in control of the cell cycle, stress response, ribosome biogenesis and in those bacteria that undergo differentiation, in morphogenesis control. In Clostridium acetobutylicum (strain ATCC 824 / DSM 792 / JCM 1419 / IAM 19013 / LMG 5710 / NBRC 13948 / NRRL B-527 / VKM B-1787 / 2291 / W), this protein is GTPase Obg.